The sequence spans 161 residues: Globin CTT-VIIB-5/CTT-VIIB-9 (161 aa).

The first 16 residues, 1–16, serve as a signal peptide directing secretion; that stretch reads MKFFAVLALCIVGAIA. The Globin domain maps to 18-161; sequence PLTADEASLV…NTFAIVVPRL (144 aa). The heme b site is built by His-76 and His-111.

This sequence belongs to the globin family. In terms of assembly, homodimer.

The chain is Globin CTT-VIIB-5/CTT-VIIB-9 (CTT-7B5) from Chironomus thummi thummi (Midge).